A 617-amino-acid chain; its full sequence is DNA-(apurinic or apyrimidinic site) endonuclease (617 aa).

The tract at residues 74 to 99 (IKNSDEQNNSNNNNNNSSSSNFCSNN) is disordered. Low complexity predominate over residues 81-99 (NNSNNNNNNSSSSNFCSNN). The Mg(2+) site is built by N284 and E317. A disordered region spans residues 326–349 (SEPCDNKNKNKNKNDGIRDRGKIK). A compositionally biased stretch (basic and acidic residues) spans 329–349 (CDNKNKNKNKNDGIRDRGKIK). Residues D474, N476, D606, and H607 each coordinate Mg(2+). H607 serves as the catalytic Proton acceptor.

Belongs to the DNA repair enzymes AP/ExoA family. Requires Mg(2+) as cofactor. It depends on Mn(2+) as a cofactor. In terms of processing, may be proteolytically cleaved into a 64 kDa form.

Its subcellular location is the mitochondrion. It catalyses the reaction Exonucleolytic cleavage in the 3'- to 5'-direction to yield nucleoside 5'-phosphates.. Its activity is regulated as follows. Apurinic/apyrimidinic (AP) endonuclease activity is maximal at low Mg(2+) (0.5-2 mM) with no activity seen at high concentrations (more than 10 mM). 3'-5' exonuclease activity is maximal in the range of 0.5-2 mM Mg(2+) with activity seen up to 10 mM Mg(2+). In terms of biological role, multifunctional protein that plays a central role in mitochondrial DNA base excision repair (BER) pathway induced by oxidative stress. Has apurinic/apyrimidinic (AP) endonuclease activity towards double-stranded DNA (dsDNA). Has nucleotide incision repair (NIR) activity; acts on dsDNA with oxidized bases thymine glycol and 5,6-dihydro-2'-deoxyuridine. Has 3'-5' exonuclease; can use dsDNA templates with 3'-OH termini including blunt-end, gapped and mismatched 3'-recessed. Has 3'-phosphatase activity; cleaves 3'-phosphate from blunt, recessed and gapped dsDNA templates, followed by 3'-5' exonuclease activity. Has RNase H-like activity; cleaves RNA on 3'-recessed RNA-DNA duplex. Plays a role in merosome infection of host erythrocytes. The sequence is that of DNA-(apurinic or apyrimidinic site) endonuclease from Plasmodium falciparum (isolate 3D7).